A 588-amino-acid chain; its full sequence is Adenine deaminase (588 aa).

It belongs to the metallo-dependent hydrolases superfamily. Adenine deaminase family. In terms of assembly, homodimer. Mn(2+) is required as a cofactor.

The catalysed reaction is adenine + H2O + H(+) = hypoxanthine + NH4(+). This chain is Adenine deaminase, found in Escherichia fergusonii (strain ATCC 35469 / DSM 13698 / CCUG 18766 / IAM 14443 / JCM 21226 / LMG 7866 / NBRC 102419 / NCTC 12128 / CDC 0568-73).